We begin with the raw amino-acid sequence, 344 residues long: MEEKITYKNAGVDTEKGREFIQKIKRNVESTHGPRVIGGLGGFAGAYDVSVLKKYKHPILLSGTDGVGTKIELARLLKIYNTIGIDLVAMCVNDILVCGGEPLFFLDYIACGKLDPEKMDQIVSGIVQGCKMSNASLLGGETAEHPGTMKEDEFDLAGFVVGAVEKDSMIDGSTIRSGDKILGLESSGPHSNGFSLIRKLLLKEGKYLPTDPQQVKFLKDYALKPTRIYVSSILKLLQQVSVKGMVHITGGGYQENVPRILPQGTQSKFFKEKIPSGYFFEKIKKDHKIEELELFATFNMGIGYMVIVSEENAELAKKIMESSGEVVHEIGEIVSGNKEEVQFV.

Belongs to the AIR synthase family.

It localises to the cytoplasm. The enzyme catalyses 2-formamido-N(1)-(5-O-phospho-beta-D-ribosyl)acetamidine + ATP = 5-amino-1-(5-phospho-beta-D-ribosyl)imidazole + ADP + phosphate + H(+). Its pathway is purine metabolism; IMP biosynthesis via de novo pathway; 5-amino-1-(5-phospho-D-ribosyl)imidazole from N(2)-formyl-N(1)-(5-phospho-D-ribosyl)glycinamide: step 2/2. This Leptospira interrogans serogroup Icterohaemorrhagiae serovar Lai (strain 56601) protein is Phosphoribosylformylglycinamidine cyclo-ligase.